A 327-amino-acid chain; its full sequence is Vacuolar protein sorting-associated protein 26A (327 aa).

A disordered region spans residues 306 to 327 (RTNFHQRFESPESQASAEQPEM). Position 315 is a phosphoserine (Ser-315). Over residues 316–327 (PESQASAEQPEM) the composition is skewed to polar residues.

The protein belongs to the VPS26 family. As to quaternary structure, component of the heterotrimeric retromer cargo-selective complex (CSC), also described as vacuolar protein sorting subcomplex (VPS), formed by VPS26 (VPS26A or VPS26B), VPS29 and VPS35. The CSC has a highly elongated structure with VPS26 and VPS29 binding independently at opposite distal ends of VPS35 as central platform. The CSC is believed to associate with variable sorting nexins to form functionally distinct retromer complex variants. The originally described retromer complex (also called SNX-BAR retromer) is a pentamer containing the CSC and a heterodimeric membrane-deforming subcomplex formed between SNX1 or SNX2 and SNX5 or SNX6 (also called SNX-BAR subcomplex); the respective CSC and SNX-BAR subcomplexes associate with low affinity. The CSC associates with SNX3 to form a SNX3-retromer complex. The CSC associates with SNX27, the WASH complex and the SNX-BAR subcomplex to form the SNX27-retromer complex. Interacts with VPS29, VPS35, SNX27, SNX1, SNX2, SNX5, SNX6, SNX3, RAB7A, ECPAS, EHD1, WASHC5, SORL1.

The protein localises to the cytoplasm. Its subcellular location is the endosome membrane. It is found in the early endosome. Acts as a component of the retromer cargo-selective complex (CSC). The CSC is believed to be the core functional component of retromer or respective retromer complex variants acting to prevent missorting of selected transmembrane cargo proteins into the lysosomal degradation pathway. The recruitment of the CSC to the endosomal membrane involves RAB7A and SNX3. The SNX-BAR retromer mediates retrograde transport of cargo proteins from endosomes to the trans-Golgi network (TGN) and is involved in endosome-to-plasma membrane transport for cargo protein recycling. The SNX3-retromer mediates the retrograde endosome-to-TGN transport of WLS distinct from the SNX-BAR retromer pathway. The SNX27-retromer is believed to be involved in endosome-to-plasma membrane trafficking and recycling of a broad spectrum of cargo proteins. The CSC complex seems to act as recruitment hub for other proteins, such as the WASH complex and TBC1D5. Required for retrograde transport of lysosomal enzyme receptor IGF2R. Required to regulate transcytosis of the polymeric immunoglobulin receptor (pIgR-pIgA). Required for the endosomal localization of WASHC2 (indicative for the WASH complex). Required for the endosomal localization of TBC1D5. Mediates retromer cargo recognition of SORL1 and is involved in trafficking of SORL1 implicated in sorting and processing of APP. Involved in retromer-independent lysosomal sorting of F2R. Involved in recycling of ADRB2. Acts redundantly with VSP26B in SNX-27 mediated endocytic recycling of SLC2A1/GLUT1. Enhances the affinity of SNX27 for PDZ-binding motifs in cargo proteins. The protein is Vacuolar protein sorting-associated protein 26A (Vps26a) of Rattus norvegicus (Rat).